We begin with the raw amino-acid sequence, 210 residues long: Probable nicotinate-nucleotide adenylyltransferase (210 aa).

The protein belongs to the NadD family.

It carries out the reaction nicotinate beta-D-ribonucleotide + ATP + H(+) = deamido-NAD(+) + diphosphate. The protein operates within cofactor biosynthesis; NAD(+) biosynthesis; deamido-NAD(+) from nicotinate D-ribonucleotide: step 1/1. Functionally, catalyzes the reversible adenylation of nicotinate mononucleotide (NaMN) to nicotinic acid adenine dinucleotide (NaAD). This chain is Probable nicotinate-nucleotide adenylyltransferase, found in Methylococcus capsulatus (strain ATCC 33009 / NCIMB 11132 / Bath).